Consider the following 109-residue polypeptide: Large ribosomal subunit protein uL24 (109 aa).

The protein belongs to the universal ribosomal protein uL24 family. In terms of assembly, part of the 50S ribosomal subunit.

Functionally, one of two assembly initiator proteins, it binds directly to the 5'-end of the 23S rRNA, where it nucleates assembly of the 50S subunit. One of the proteins that surrounds the polypeptide exit tunnel on the outside of the subunit. The polypeptide is Large ribosomal subunit protein uL24 (Rickettsia bellii (strain RML369-C)).